The primary structure comprises 512 residues: MSETDRERPLLASEERAYEETEKVLIVGIDEEEDADYDDDPGNSPKFSWKKLWLFTGPGFLMSIAFLDPGNLESDLQAGAIAGYSLIWLLMWATAIGLLIQLLSARLGVATGRHLAELCREEYPTWARMVLWIMAEIALIGADIQEVIGSAIAIKILSNGLVPLWAGVVITALDCFIFLFLENYGIRKLEAVFAILIATMALAFAWMFGQTKPSGTELLVGALVPKLSSRTIKQAVGIVGCIIMPHNVFLHSALVQSREVDPKKRFRVKEALKYYSIESTGALAVSFIINVFVTTVFAKSFYGTEIADTIGLANAGQYLQDKYGGGFFPILYIWAIGVLAAGQSSTITGTYAGQFIMGGFLNLKMKKWVRALITRSCAIIPTMIVALVFDSSDSMLDELNEWLNVLQSVQIPFAVIPLLCLVSNEQIMGSFKIQPLVQTISWIVAALVIAINGYLMVDFFSGAATNLILLVPVIIFAIAYVVFVLYLISRGLTYTPWQLVASSHKEPQRDDE.

12 consecutive transmembrane segments (helical) span residues 52–72 (LWLF…PGNL), 80–100 (AIAG…GLLI), 129–149 (MVLW…EVIG), 161–181 (LVPL…FLFL), 189–209 (LEAV…WMFG), 235–255 (AVGI…SALV), 277–297 (IEST…TTVF), 323–343 (YGGG…AAGQ), 371–391 (ALIT…VFDS), 402–422 (WLNV…LCLV), 440–460 (ISWI…VDFF), and 468–488 (ILLV…LYLI).

This sequence belongs to the NRAMP (TC 2.A.55) family. In terms of tissue distribution, expressed in vascular tissues.

The protein resides in the vacuole membrane. In terms of biological role, vacuolar metal transporter involved in intracellular metal homeostasis. Can transport iron (Fe), manganese (Mn) and cadmium (Cd). Regulates metal accumulation under Fe starvation. Acts redundantly with NRAMP3 to mobilize vacuolar Fe and provide sufficient Fe during seed germination. In association with NRAMP3, required for optimal growth and photosynthesis under Mn deficiency. Exports Mn from vacuoles in leaf mesophyll cells, making Mn available for functional photosystem II in chloroplasts. The chain is Metal transporter Nramp4 (NRAMP4) from Arabidopsis thaliana (Mouse-ear cress).